A 198-amino-acid polypeptide reads, in one-letter code: Acireductone dioxygenase 2 (198 aa).

The Fe(2+) site is built by His-99, His-101, Glu-105, and His-144. The Ni(2+) site is built by His-99, His-101, Glu-105, and His-144.

It belongs to the acireductone dioxygenase (ARD) family. The cofactor is Fe(2+). Ni(2+) is required as a cofactor. Ubiquitous.

Its subcellular location is the cytoplasm. It localises to the nucleus. It carries out the reaction 1,2-dihydroxy-5-(methylsulfanyl)pent-1-en-3-one + O2 = 4-methylsulfanyl-2-oxobutanoate + formate + 2 H(+). The catalysed reaction is 1,2-dihydroxy-5-(methylsulfanyl)pent-1-en-3-one + O2 = 3-(methylsulfanyl)propanoate + CO + formate + 2 H(+). The protein operates within amino-acid biosynthesis; L-methionine biosynthesis via salvage pathway; L-methionine from S-methyl-5-thio-alpha-D-ribose 1-phosphate: step 5/6. Functionally, catalyzes 2 different reactions between oxygen and the acireductone 1,2-dihydroxy-3-keto-5-methylthiopentene (DHK-MTPene) depending upon the metal bound in the active site. Fe-containing acireductone dioxygenase (Fe-ARD) produces formate and 2-keto-4-methylthiobutyrate (KMTB), the alpha-ketoacid precursor of methionine in the methionine recycle pathway. Ni-containing acireductone dioxygenase (Ni-ARD) produces methylthiopropionate, carbon monoxide and formate, and does not lie on the methionine recycle pathway. This Oryza sativa subsp. indica (Rice) protein is Acireductone dioxygenase 2 (ARD2).